The chain runs to 621 residues: DDB1- and CUL4-associated factor 10 homolog (621 aa).

WD repeat units follow at residues 46-85, 89-127, 131-170, and 176-215; these read GRTG…EIFK, AHTD…QKLR, GHSN…EQGL, and FHAS…TLHK. 2 disordered regions span residues 305–349 and 437–483; these read VRSE…PRQA and LMGS…TTVR. S307 is modified (phosphoserine). The span at 324 to 342 shows a compositional bias: polar residues; sequence STTLASRSSLNESQDQDTV. Positions 454–478 are enriched in low complexity; that stretch reads ESNQSSSSSSSSSSSSSSSSSSNNS. Phosphoserine occurs at positions 494 and 497. A WD 5 repeat occupies 588 to 621; the sequence is EHQDVVLCAKFSPREPLLVTGCNGGEVTWYRPNL.

Belongs to the WD repeat DCAF10 family.

The sequence is that of DDB1- and CUL4-associated factor 10 homolog from Drosophila melanogaster (Fruit fly).